A 78-amino-acid polypeptide reads, in one-letter code: Large ribosomal subunit protein bL28 (78 aa).

This sequence belongs to the bacterial ribosomal protein bL28 family.

In Psychrobacter arcticus (strain DSM 17307 / VKM B-2377 / 273-4), this protein is Large ribosomal subunit protein bL28.